Here is a 356-residue protein sequence, read N- to C-terminus: Pyruvate dehydrogenase E1 component subunit beta, mitochondrial (356 aa).

The transit peptide at 1-25 (MLSSILKKIQPSLLVNFRIITRTYA) directs the protein to the mitochondrion. E85 contributes to the thiamine diphosphate binding site. K(+)-binding residues include I138, A186, I187, D189, and N191.

Tetramer of 2 alpha and 2 beta subunits. Thiamine diphosphate is required as a cofactor.

Its subcellular location is the mitochondrion matrix. It carries out the reaction N(6)-[(R)-lipoyl]-L-lysyl-[protein] + pyruvate + H(+) = N(6)-[(R)-S(8)-acetyldihydrolipoyl]-L-lysyl-[protein] + CO2. Its function is as follows. The pyruvate dehydrogenase complex catalyzes the overall conversion of pyruvate to acetyl-CoA and CO(2). It contains multiple copies of three enzymatic components: pyruvate dehydrogenase (E1), dihydrolipoamide acetyltransferase (E2) and lipoamide dehydrogenase (E3). The sequence is that of Pyruvate dehydrogenase E1 component subunit beta, mitochondrial (pdhB) from Dictyostelium discoideum (Social amoeba).